Consider the following 374-residue polypeptide: Phospho-N-acetylmuramoyl-pentapeptide-transferase (374 aa).

10 helical membrane passes run 3-23 (AVIV…PIAI), 52-72 (MGGV…HLAL), 85-105 (PTIT…VGFI), 125-145 (LLGQ…FPST), 170-190 (IPAL…VVMA), 201-221 (LDGL…LIAF), 244-264 (PLEI…FLWW), 271-291 (IFMG…MAMS), 294-314 (TILL…SVVI), and 350-370 (FWII…SEFL).

Belongs to the glycosyltransferase 4 family. MraY subfamily. The cofactor is Mg(2+).

It localises to the cell membrane. The catalysed reaction is UDP-N-acetyl-alpha-D-muramoyl-L-alanyl-gamma-D-glutamyl-meso-2,6-diaminopimeloyl-D-alanyl-D-alanine + di-trans,octa-cis-undecaprenyl phosphate = di-trans,octa-cis-undecaprenyl diphospho-N-acetyl-alpha-D-muramoyl-L-alanyl-D-glutamyl-meso-2,6-diaminopimeloyl-D-alanyl-D-alanine + UMP. The protein operates within cell wall biogenesis; peptidoglycan biosynthesis. Its function is as follows. Catalyzes the initial step of the lipid cycle reactions in the biosynthesis of the cell wall peptidoglycan: transfers peptidoglycan precursor phospho-MurNAc-pentapeptide from UDP-MurNAc-pentapeptide onto the lipid carrier undecaprenyl phosphate, yielding undecaprenyl-pyrophosphoryl-MurNAc-pentapeptide, known as lipid I. This Salinispora arenicola (strain CNS-205) protein is Phospho-N-acetylmuramoyl-pentapeptide-transferase.